Consider the following 330-residue polypeptide: PTS system mannose-specific EIIAB component (330 aa).

The PTS EIIA type-4 domain maps to 2–130 (GIGIIIASHG…NIIKESKDGI (129 aa)). H10 serves as the catalytic Tele-phosphohistidine intermediate; for EIIA activity. H10 bears the Phosphohistidine; by HPr mark. Residues 143–161 (TAATEKVVNALQGAIPAGT) are hinge. The PTS EIIB type-4 domain occupies 166–330 (GKLKINLARV…FELIQKANIK (165 aa)). The active-site Pros-phosphohistidine intermediate; for EIIB activity is the H181. Position 181 is a phosphohistidine; by EIIA (H181).

As to quaternary structure, homodimer.

The protein resides in the cytoplasm. Its subcellular location is the cell membrane. The enzyme catalyses D-mannose(out) + N(pros)-phospho-L-histidyl-[protein] = D-mannose 6-phosphate(in) + L-histidyl-[protein]. In terms of biological role, the phosphoenolpyruvate-dependent sugar phosphotransferase system (sugar PTS), a major carbohydrate active transport system, catalyzes the phosphorylation of incoming sugar substrates concomitantly with their translocation across the cell membrane. The enzyme II ManXYZ PTS system is involved in mannose transport. The chain is PTS system mannose-specific EIIAB component from Streptococcus pyogenes serotype M6 (strain ATCC BAA-946 / MGAS10394).